Here is a 465-residue protein sequence, read N- to C-terminus: Probable oxidoreductase AIM17 (465 aa).

The transit peptide at 1-16 (MLRSNLCRGSRILARL) directs the protein to the mitochondrion. The Fe cation site is built by histidine 246, aspartate 248, and histidine 428.

Belongs to the gamma-BBH/TMLD family. It depends on Fe(2+) as a cofactor. L-ascorbate is required as a cofactor.

It localises to the mitochondrion. This is Probable oxidoreductase AIM17 (AIM17) from Saccharomyces cerevisiae (strain ATCC 204508 / S288c) (Baker's yeast).